Reading from the N-terminus, the 332-residue chain is Galactosylgalactosylxylosylprotein 3-beta-glucuronosyltransferase 1 (332 aa).

Residues 1-6 (MPKRRD) are Cytoplasmic-facing. Positions 3–5 (KRR) are essential for transport from endoplasmic reticulum to Golgi apparatus and interaction with SAR1A. Residues 7-27 (ILAIVLIVLPWTLLITVWHQS) form a helical; Signal-anchor for type II membrane protein membrane-spanning segment. Residues 28-332 (TLAPLLAVHK…KGFTDPSVEI (305 aa)) are Lumenal-facing. Residue 91-93 (PTY) participates in UDP-alpha-D-glucuronate binding. 2 positions are modified to phosphothreonine: Thr103 and Thr108. Position 122 (Asp122) interacts with UDP-alpha-D-glucuronate. Residue Asn140 is glycosylated (N-linked (GlcNAc...) asparagine). 2 residues coordinate UDP-alpha-D-glucuronate: Arg165 and Arg170. Asn184 carries an N-linked (GlcNAc...) asparagine glycan. Position 195-197 (195-197 (DDD)) interacts with UDP-alpha-D-glucuronate. Mn(2+) is bound at residue Asp197. The tract at residues 243–252 (FDPHRPFAID) is interaction with galactose moiety of substrate glycoprotein. Glu282 acts as the Proton donor/acceptor in catalysis. Residue Asn301 is glycosylated (N-linked (GlcNAc...) asparagine). 309–311 (HTR) is a UDP-alpha-D-glucuronate binding site.

It belongs to the glycosyltransferase 43 family. In terms of assembly, homodimer. Interacts with SAR1A. It depends on Mn(2+) as a cofactor. The soluble form derives from the membrane form by proteolytic processing.

It is found in the golgi apparatus membrane. It localises to the secreted. The catalysed reaction is 3-O-(beta-D-galactosyl-(1-&gt;3)-beta-D-galactosyl-(1-&gt;4)-beta-D-xylosyl)-L-seryl-[protein] + UDP-alpha-D-glucuronate = 3-O-(beta-D-GlcA-(1-&gt;3)-beta-D-Gal-(1-&gt;3)-beta-D-Gal-(1-&gt;4)-beta-D-Xyl)-L-seryl-[protein] + UDP + H(+). It functions in the pathway protein modification; protein glycosylation. Functionally, involved in the biosynthesis of L2/HNK-1 carbohydrate epitope on glycoproteins. Can also play a role in glycosaminoglycan biosynthesis. Substrates include asialo-orosomucoid (ASOR), asialo-fetuin, and asialo-neural cell adhesion molecule. Requires sphingomyelin for activity: stearoyl-sphingomyelin was the most effective, followed by palmitoyl-sphingomyelin and lignoceroyl-sphingomyelin. Activity was demonstrated only for sphingomyelin with a saturated fatty acid and not for that with an unsaturated fatty acid, regardless of the length of the acyl group. In Pan troglodytes (Chimpanzee), this protein is Galactosylgalactosylxylosylprotein 3-beta-glucuronosyltransferase 1.